The sequence spans 331 residues: Putative peptidyl-prolyl cis-trans isomerase RF_0616 (331 aa).

A disordered region spans residues 28–50; the sequence is NPTTIEQTASNNSSTDENQTSIN. Residues 128–226 form the PPIase FKBP-type domain; that stretch reads GHVVTVFYQI…NNEVKIYDDE (99 aa).

The catalysed reaction is [protein]-peptidylproline (omega=180) = [protein]-peptidylproline (omega=0). This chain is Putative peptidyl-prolyl cis-trans isomerase RF_0616, found in Rickettsia felis (strain ATCC VR-1525 / URRWXCal2) (Rickettsia azadi).